Consider the following 126-residue polypeptide: RxLR effector protein BLR31 (126 aa).

The N-terminal stretch at 1–22 is a signal peptide; it reads MLLSRAISVLALLACIRCGVHA. A RxLR-dEER motif is present at residues 44-58; that stretch reads RLLRTSVDFKDSEER.

Belongs to the RxLR effector family.

Its subcellular location is the secreted. The protein resides in the host cell. Secreted effector that triggers a hypersensitive response (HR) in 3 Lactuca saligna accessions (CGN05947, CGN05310, CGN05304). This is RxLR effector protein BLR31 from Bremia lactucae (Lettuce downy mildew).